A 139-amino-acid polypeptide reads, in one-letter code: Flagellar assembly factor FliW 2 (139 aa).

This sequence belongs to the FliW family. As to quaternary structure, interacts with translational regulator CsrA and flagellin(s).

The protein localises to the cytoplasm. Functionally, acts as an anti-CsrA protein, binds CsrA and prevents it from repressing translation of its target genes, one of which is flagellin. Binds to flagellin and participates in the assembly of the flagellum. The chain is Flagellar assembly factor FliW 2 from Helicobacter hepaticus (strain ATCC 51449 / 3B1).